The sequence spans 651 residues: Probable potassium transport system protein Kup (651 aa).

The next 12 helical transmembrane spans lie at 41–61 (LVLGALGVVYGDIGTSPIYAF), 82–102 (VVSLIFWALTLVVTVKYVLFV), 130–150 (LILGVGICGAALFFGDAVITP), 163–183 (IVAPNLTPFVVPATVVILVTL), 194–214 (VAIVFGPIMALWFVALGASGL), 235–255 (FLTVSPAVAFVTVGAVFLAMT), 276–296 (WLWIVFPCLLLNYFGQAAFIL), 309–329 (MIPSFALWPMVLLATAATVIA), 366–386 (IYIPRVNLLLGLAVVILVLGF), 395–415 (AYGIAVTGNMLVTTVLLYIVM), 426–446 (ALPIILGFLVIDMLFFSANII), and 450–470 (EGGWASIGIATVLVLIMWTWV).

It belongs to the HAK/KUP transporter (TC 2.A.72) family.

Its subcellular location is the cell inner membrane. The enzyme catalyses K(+)(in) + H(+)(in) = K(+)(out) + H(+)(out). Transport of potassium into the cell. Likely operates as a K(+):H(+) symporter. This is Probable potassium transport system protein Kup from Brucella suis (strain ATCC 23445 / NCTC 10510).